The primary structure comprises 202 residues: Small ribosomal subunit protein uS4 (202 aa).

The 64-residue stretch at 93-156 (RRLDNMVYRL…KDLKIISEAV (64 aa)) folds into the S4 RNA-binding domain.

Belongs to the universal ribosomal protein uS4 family. Part of the 30S ribosomal subunit. Contacts protein S5. The interaction surface between S4 and S5 is involved in control of translational fidelity.

One of the primary rRNA binding proteins, it binds directly to 16S rRNA where it nucleates assembly of the body of the 30S subunit. Functionally, with S5 and S12 plays an important role in translational accuracy. The sequence is that of Small ribosomal subunit protein uS4 from Pediococcus pentosaceus (strain ATCC 25745 / CCUG 21536 / LMG 10740 / 183-1w).